Reading from the N-terminus, the 84-residue chain is MSHQCYLTGKKTMVVNAVIRRGKARREGGVGRKTTGITKRVQKANLHKKLIRENGVLKRVWLSAAALRTLNKGPYQGVELACRC.

This sequence belongs to the bacterial ribosomal protein bL28 family.

The sequence is that of Large ribosomal subunit protein bL28 from Deinococcus geothermalis (strain DSM 11300 / CIP 105573 / AG-3a).